The chain runs to 463 residues: T-box transcription factor TBX1-A (463 aa).

Disordered stretches follow at residues S39–A58 and G75–N104. A compositionally biased stretch (low complexity) spans G75–S96. Positions L119 to D297 form a DNA-binding region, T-box. 2 disordered regions span residues R320–G354 and V377–Y409. Positions N323–G332 are enriched in polar residues. The segment covering S333 to A347 has biased composition (basic and acidic residues). The short motif at K420–I431 is the Nuclear localization signal element.

Binds DNA as a dimer. Interacts with dscr6/ripply3.

The protein resides in the nucleus. Probable transcriptional regulator involved in developmental processes. Binds to the palindromic T site 5'-TTCACACCTAGGTGTGAA-3' DNA sequence. Induces pre-placodal ectoderm (PPE) gene expression in regions where RIPPLY3 is absent. Plays a role in the formation of the anteroposterior (AP) axis during embryonic development; required to establish the posterolateral border of the pre-placodal ectoderm (PPE) acting downstream of the retinoic acid receptor (RAR) signaling. The protein is T-box transcription factor TBX1-A (tbx1-a) of Xenopus laevis (African clawed frog).